Reading from the N-terminus, the 445-residue chain is Ribosomal protein uS12 methylthiotransferase RimO (445 aa).

Residues 4–119 (LKFGLVSLGC…LDDAIEDFFN (116 aa)) form the MTTase N-terminal domain. [4Fe-4S] cluster is bound by residues Cys13, Cys48, Cys82, Cys156, Cys160, and Cys163. Residues 142 to 372 (TTGEYSSYVR…MLIQQQVSKN (231 aa)) enclose the Radical SAM core domain. In terms of domain architecture, TRAM spans 375–441 (AKKIGKVYKV…EYDLIGVVYN (67 aa)).

It belongs to the methylthiotransferase family. RimO subfamily. [4Fe-4S] cluster serves as cofactor.

It localises to the cytoplasm. It carries out the reaction L-aspartate(89)-[ribosomal protein uS12]-hydrogen + (sulfur carrier)-SH + AH2 + 2 S-adenosyl-L-methionine = 3-methylsulfanyl-L-aspartate(89)-[ribosomal protein uS12]-hydrogen + (sulfur carrier)-H + 5'-deoxyadenosine + L-methionine + A + S-adenosyl-L-homocysteine + 2 H(+). Functionally, catalyzes the methylthiolation of an aspartic acid residue of ribosomal protein uS12. In Clostridium acetobutylicum (strain ATCC 824 / DSM 792 / JCM 1419 / IAM 19013 / LMG 5710 / NBRC 13948 / NRRL B-527 / VKM B-1787 / 2291 / W), this protein is Ribosomal protein uS12 methylthiotransferase RimO.